We begin with the raw amino-acid sequence, 427 residues long: Glutamate-1-semialdehyde 2,1-aminomutase (427 aa).

Lys-265 is modified (N6-(pyridoxal phosphate)lysine).

The protein belongs to the class-III pyridoxal-phosphate-dependent aminotransferase family. HemL subfamily. Homodimer. Requires pyridoxal 5'-phosphate as cofactor.

The protein resides in the cytoplasm. The catalysed reaction is (S)-4-amino-5-oxopentanoate = 5-aminolevulinate. The protein operates within porphyrin-containing compound metabolism; protoporphyrin-IX biosynthesis; 5-aminolevulinate from L-glutamyl-tRNA(Glu): step 2/2. This is Glutamate-1-semialdehyde 2,1-aminomutase from Neisseria meningitidis serogroup A / serotype 4A (strain DSM 15465 / Z2491).